Consider the following 332-residue polypeptide: Probable xyloglucan endotransglucosylase/hydrolase protein 28 (332 aa).

Residues 1–22 form the signal peptide; that stretch reads MGFITRFLVFMSLFTSLVSGFA. The GH16 domain occupies 23–223; sequence LQKLPLIQFD…YKYAPYVSQF (201 aa). Glu108 serves as the catalytic Nucleophile. The Proton donor role is filled by Glu112. Xyloglucan contacts are provided by residues Glu112 and 125–127; that span reads QTN. An N-linked (GlcNAc...) asparagine glycan is attached at Asn131. Xyloglucan is bound by residues 135-139, 202-203, Gly207, and Arg282; these read HLGRE and KW. Cysteines 277 and 290 form a disulfide. Residues 313–326 are compositionally biased toward basic residues; it reads HGHRRGKHRSRSRL. The disordered stretch occupies residues 313-332; the sequence is HGHRRGKHRSRSRLARTESI.

The protein belongs to the glycosyl hydrolase 16 family. XTH group 3 subfamily. In terms of processing, contains at least one intrachain disulfide bond essential for its enzymatic activity. In terms of tissue distribution, expressed in 7 day old seedlings, roots, rosette leaves, internodes between nodes bearing axillary shoots, nodes bearing flowers, flower buds and siliques.

The protein resides in the secreted. It localises to the cell wall. It is found in the extracellular space. Its subcellular location is the apoplast. The enzyme catalyses breaks a beta-(1-&gt;4) bond in the backbone of a xyloglucan and transfers the xyloglucanyl segment on to O-4 of the non-reducing terminal glucose residue of an acceptor, which can be a xyloglucan or an oligosaccharide of xyloglucan.. In terms of biological role, catalyzes xyloglucan endohydrolysis (XEH) and/or endotransglycosylation (XET). Cleaves and religates xyloglucan polymers, an essential constituent of the primary cell wall, and thereby participates in cell wall construction of growing tissues. The sequence is that of Probable xyloglucan endotransglucosylase/hydrolase protein 28 (XTH28) from Arabidopsis thaliana (Mouse-ear cress).